Reading from the N-terminus, the 302-residue chain is Short-chain dehydrogenase/reductase 3 (302 aa).

A run of 4 helical transmembrane segments spans residues 9–29 (LVMFPLQMIYLVVKAAVGLVL), 170–190 (IVCLNSVLALSAIPGAIDYCT), 195–215 (AFAFMESLTLGLLDCPGVSAT), and 253–273 (AVQLNQALLLLPWTMHALVIL). Residue serine 175 participates in substrate binding. Tyrosine 188 acts as the Proton acceptor in catalysis.

It belongs to the short-chain dehydrogenases/reductases (SDR) family. As to expression, widely expressed with highest levels found in heart, placenta, lung, liver, kidney, pancreas, thyroid, testis, stomach, trachea and spinal cord. Lower levels found in skeletal muscle, intestine and lymph node. No expression detected in brain. In the retina, expressed in cone but not rod outer segments.

It is found in the membrane. The catalysed reaction is all-trans-retinol + NADP(+) = all-trans-retinal + NADPH + H(+). Its function is as follows. Catalyzes the reduction of all-trans-retinal to all-trans-retinol in the presence of NADPH. The sequence is that of Short-chain dehydrogenase/reductase 3 (DHRS3) from Homo sapiens (Human).